Consider the following 303-residue polypeptide: Polyisoprenyl-teichoic acid--peptidoglycan teichoic acid transferase TagU (303 aa).

The Cytoplasmic segment spans residues Met1–Lys4. The chain crosses the membrane as a helical; Signal-anchor for type II membrane protein span at residues Ile5–Tyr25. At Asn26–Lys303 the chain is on the extracellular side.

It belongs to the LytR/CpsA/Psr (LCP) family.

Its subcellular location is the cell membrane. It functions in the pathway cell wall biogenesis. In terms of biological role, may catalyze the final step in cell wall teichoic acid biosynthesis, the transfer of the anionic cell wall polymers (APs) from their lipid-linked precursor to the cell wall peptidoglycan (PG). The chain is Polyisoprenyl-teichoic acid--peptidoglycan teichoic acid transferase TagU from Bacillus cereus (strain AH820).